A 418-amino-acid polypeptide reads, in one-letter code: Ciliary microtubule-associated protein 2 (418 aa).

Sperm.

This Homo sapiens (Human) protein is Ciliary microtubule-associated protein 2.